A 202-amino-acid chain; its full sequence is Putative 3-methyladenine DNA glycosylase (202 aa).

Belongs to the DNA glycosylase MPG family.

The protein is Putative 3-methyladenine DNA glycosylase of Staphylococcus aureus (strain Mu3 / ATCC 700698).